The primary structure comprises 102 residues: Small ribosomal subunit protein uS10 (102 aa).

It belongs to the universal ribosomal protein uS10 family. As to quaternary structure, part of the 30S ribosomal subunit.

Functionally, involved in the binding of tRNA to the ribosomes. This Arthrobacter sp. (strain FB24) protein is Small ribosomal subunit protein uS10.